A 205-amino-acid polypeptide reads, in one-letter code: Protein MIS12 homolog (205 aa).

The stretch at 108–205 (PYSEEDFQHL…EKESKRLKIS (98 aa)) forms a coiled coil.

It belongs to the mis12 family. In terms of assembly, component of the MIS12 complex composed of MIS12, DSN1, NSL1 and PMF1. Also interacts with KNL1, CBX3, CBX5, NDC80 and ZWINT.

It localises to the chromosome. The protein localises to the centromere. It is found in the kinetochore. In terms of biological role, part of the MIS12 complex which is required for normal chromosome alignment and segregation and for kinetochore formation during mitosis. Essential for proper kinetochore microtubule attachments. The polypeptide is Protein MIS12 homolog (Homo sapiens (Human)).